Reading from the N-terminus, the 448-residue chain is Probable malate:quinone oxidoreductase (448 aa).

The protein belongs to the MQO family. The cofactor is FAD.

It carries out the reaction (S)-malate + a quinone = a quinol + oxaloacetate. It participates in carbohydrate metabolism; tricarboxylic acid cycle; oxaloacetate from (S)-malate (quinone route): step 1/1. In terms of biological role, catalyzes oxidation of malate to oxaloacetate in the citric acid cycle. Donates electrons to quinones of the electron transfer chain. The chain is Probable malate:quinone oxidoreductase (mqo) from Campylobacter jejuni subsp. jejuni serotype O:2 (strain ATCC 700819 / NCTC 11168).